We begin with the raw amino-acid sequence, 556 residues long: Urocanate hydratase (556 aa).

NAD(+)-binding positions include 52–53 (GG), Gln-130, 176–178 (GMG), Glu-196, Arg-201, 242–243 (NA), 263–267 (QTSAH), 273–274 (YL), and Tyr-322. Cys-410 is a catalytic residue. Residue Gly-492 coordinates NAD(+).

The protein belongs to the urocanase family. It depends on NAD(+) as a cofactor.

It is found in the cytoplasm. It carries out the reaction 4-imidazolone-5-propanoate = trans-urocanate + H2O. It participates in amino-acid degradation; L-histidine degradation into L-glutamate; N-formimidoyl-L-glutamate from L-histidine: step 2/3. In terms of biological role, catalyzes the conversion of urocanate to 4-imidazolone-5-propionate. The polypeptide is Urocanate hydratase (Bradyrhizobium sp. (strain BTAi1 / ATCC BAA-1182)).